A 395-amino-acid polypeptide reads, in one-letter code: Renin (395 aa).

Positions 1 to 21 are cleaved as a signal peptide; the sequence is MLRSWEFVLLISCFLCFSSDA. A propeptide spans 22-43 (activation peptide); it reads LQRISLKKMPSIRETLQEMGMK. An N-linked (GlcNAc...) asparagine glycan is attached at Asn-64. In terms of domain architecture, Peptidase A1 spans 79 to 392; that stretch reads YYGEISIGTP…DRQNNRIGFA (314 aa). Residue Asp-97 is part of the active site. Intrachain disulfides connect Cys-110-Cys-117 and Cys-274-Cys-278. Asp-283 is a catalytic residue. A disulfide bridge links Cys-316 with Cys-351.

The protein belongs to the peptidase A1 family. Post-translationally, N-glycosylated. In terms of tissue distribution, expressed by the venom gland (at protein level).

The protein localises to the secreted. It catalyses the reaction Cleavage of Leu-|-Xaa bond in angiotensinogen to generate angiotensin I.. Inhibited completely by aspartyl protease inhibitor pepstatin A, but not by the serine- or metalloproteinase inhibitors PMSF or EDTA. In terms of biological role, renin is a highly specific endopeptidase, whose only known function is to generate angiotensin I from angiotensinogen in the plasma, initiating a cascade of reactions that produce an elevation of blood pressure and increased sodium retention by the kidney. This protein is also found in snake venom and shown to specifically cleave human and porcine angiotensinogen into angiotensin I. It does not have general protease activity, no cleavage of alpha or beta casein. May be directly responsible for elevation of blood pressure in the victims of envenomation. This is Renin from Echis ocellatus (Ocellated saw-scaled viper).